A 494-amino-acid chain; its full sequence is MLVSGMLLVVVLTCLSVMIIMSVWRQRRLLRKMPPGPTPLPFIGNFLELDTEKFYDCLSKMRERYGPVFTIHLGPRPAVMLWGYDAVKEALIDQAEELSDRGEQAFFDWFFKGYGVVFSSGERAKQLRRFSIATLRDFGFGKRGIEERTIEETSFLIQALRDTNGATIDPTFYMSRTVSNVISSIVFGNRFEYDDKEFLSLLGMIMRSFQFMSTSTGQLFEMFYSVMKHLPGCQHQAYKEMQGLEDFIARKVEENQRTLDPNSPRDFIDSFLIRMQEEKKNPRTQFHMRNLLMTTLNLFFAGTETVSTTTRYGFLLLMKYPHIAAKMHEEIDQVIGRNRQPKYEDHLKMPYTEAVIYEIQRFVDVVPLGLPRSTTKDIKFRDFLIPKGTDVFPVLSSVLKDPKFFSNPNDFNPQHFSDDKGQFKKSNAFMPFSVGKRYCFGESLAKMELFIFFTTIMQNFCFKSPQAPQDIDVTPQYFSFAAIPPKFTMSFLPR.

Heme is bound at residue Cys439.

Belongs to the cytochrome P450 family. Requires heme as cofactor. As to expression, liver.

It is found in the endoplasmic reticulum membrane. It localises to the microsome membrane. The enzyme catalyses an organic molecule + reduced [NADPH--hemoprotein reductase] + O2 = an alcohol + oxidized [NADPH--hemoprotein reductase] + H2O + H(+). Highly active in 7-ethoxycoumarin O-deethylation, and benzphetamine N-demethylation; moderately active in testosterone 7-alpha-hydroxylation, ethylmorphine N-demethylation, p-nitroanisole O-demethylation; and only slightly active in benzopyrene 3-hydroxylation, 7-ethoxyresorufin O-deethylation, testosterone 2-alpha-hydroxylation and testosterone 17-oxidation. Competent in the metabolic activation of aflatoxin B1. The sequence is that of Cytochrome P450 2A8 (CYP2A8) from Mesocricetus auratus (Golden hamster).